Here is a 727-residue protein sequence, read N- to C-terminus: ATP-dependent zinc metalloprotease FtsH (727 aa).

At 1–6 (MQKAFR) the chain is on the cytoplasmic side. The chain crosses the membrane as a helical span at residues 7 to 27 (NVLVIAIIGVIIFGVFSYING). The Extracellular portion of the chain corresponds to 28-110 (NGNTPKQLSY…KVKEEEKQSV (83 aa)). Residues 111 to 131 (FVSMLTTLIPVLIIAFLFIFF) form a helical membrane-spanning segment. The Cytoplasmic segment spans residues 132-727 (LSQAQGGGGG…PNDPNNPSNR (596 aa)). 205–212 (GPPGTGKT) serves as a coordination point for ATP. A Zn(2+)-binding site is contributed by H427. E428 is an active-site residue. 2 residues coordinate Zn(2+): H431 and D503. 2 stretches are compositionally biased toward basic and acidic residues: residues 645–684 (LEEG…DQLR) and 691–706 (NDQH…DTGH). The tract at residues 645–727 (LEEGKEDMRE…PNDPNNPSNR (83 aa)) is disordered. Low complexity predominate over residues 710 to 727 (PNIDKPYNPNDPNNPSNR).

It in the central section; belongs to the AAA ATPase family. In the C-terminal section; belongs to the peptidase M41 family. In terms of assembly, homohexamer. Zn(2+) is required as a cofactor.

The protein resides in the cell membrane. Acts as a processive, ATP-dependent zinc metallopeptidase for both cytoplasmic and membrane proteins. Plays a role in the quality control of integral membrane proteins. This chain is ATP-dependent zinc metalloprotease FtsH, found in Staphylococcus haemolyticus (strain JCSC1435).